The sequence spans 153 residues: Pheromone-binding protein Gp-9 (153 aa).

Residues 1–19 (MKTFVLHIFIFALVAFASA) form the signal peptide. 3 disulfide bridges follow: C37/C77, C73/C129, and C118/C138.

It belongs to the PBP/GOBP family. As to quaternary structure, homodimer.

Its subcellular location is the secreted. Its function is as follows. Colony queen number, a major feature of social organization, is associated with worker genotype for Gp-9. Colonies are headed by either a single reproductive queen (monogyne form) or multiple queens (polygyne form). Differences in worker Gp-9 genotypes between social forms may cause differences in workers' abilities to recognize queens and regulate their numbers. The protein is Pheromone-binding protein Gp-9 of Solenopsis richteri (Black imported fire ant).